The chain runs to 185 residues: Peptidyl-tRNA hydrolase (185 aa).

Tyr14 is a tRNA binding site. His19 acts as the Proton acceptor in catalysis. Tyr65, Asn67, and Asn113 together coordinate tRNA.

The protein belongs to the PTH family. Monomer.

The protein resides in the cytoplasm. The enzyme catalyses an N-acyl-L-alpha-aminoacyl-tRNA + H2O = an N-acyl-L-amino acid + a tRNA + H(+). Hydrolyzes ribosome-free peptidyl-tRNAs (with 1 or more amino acids incorporated), which drop off the ribosome during protein synthesis, or as a result of ribosome stalling. Its function is as follows. Catalyzes the release of premature peptidyl moieties from peptidyl-tRNA molecules trapped in stalled 50S ribosomal subunits, and thus maintains levels of free tRNAs and 50S ribosomes. This Rickettsia canadensis (strain McKiel) protein is Peptidyl-tRNA hydrolase.